The primary structure comprises 144 residues: Interleukin-9 (144 aa).

An N-terminal signal peptide occupies residues 1-18; sequence MLVTYILASVLLFSSVLG. Gln19 bears the Pyrrolidone carboxylic acid mark. Asn50, Asn78, Asn101, and Asn114 each carry an N-linked (GlcNAc...) asparagine glycan.

It belongs to the IL-7/IL-9 family. In terms of assembly, interacts with IL9R. Interacts with IL2RG.

The protein resides in the secreted. In terms of biological role, multifunctional cytokine secreted mainly by T-helper 2 lymphocytes and also mast cells or NKT cells that plays important roles in the immune response against parasites. Affects intestinal epithelial permeability and adaptive immunity. In addition, induces the differentiation of specific T-cell subsets such as IL-17 producing helper T-cells (TH17) and also proliferation and differentiation of mast cells. Mechanistically, exerts its biological effects through a receptor composed of IL9R subunit and a signal transducing subunit IL2RG. Receptor stimulation results in the rapid activation of JAK1 and JAK3 kinase activities leading to STAT1, STAT3 and STAT5-mediated transcriptional programs. Induction of differentiation genes seems to be mediated by STAT1 alone, while protection of cells from apoptosis depends on STAT3 and STAT5. This Mus musculus (Mouse) protein is Interleukin-9 (Il9).